Here is a 604-residue protein sequence, read N- to C-terminus: UvrABC system protein C (604 aa).

The region spanning 14–91 is the GIY-YIG domain; that stretch reads ESPGVYRMLD…IKEQRPPYNI (78 aa). The region spanning 202–237 is the UVR domain; the sequence is EQVTAQLTRDMETASQALDFEEAARLRDQIQQLRRL. Residues 538–557 are disordered; it reads GHRQQRDKQRRTSTLQDIPG.

It belongs to the UvrC family. As to quaternary structure, interacts with UvrB in an incision complex.

It localises to the cytoplasm. The UvrABC repair system catalyzes the recognition and processing of DNA lesions. UvrC both incises the 5' and 3' sides of the lesion. The N-terminal half is responsible for the 3' incision and the C-terminal half is responsible for the 5' incision. This chain is UvrABC system protein C, found in Chromohalobacter salexigens (strain ATCC BAA-138 / DSM 3043 / CIP 106854 / NCIMB 13768 / 1H11).